The sequence spans 243 residues: Pyridoxine 5'-phosphate synthase (243 aa).

A 3-amino-2-oxopropyl phosphate-binding site is contributed by Asn7. Asp9–His10 is a 1-deoxy-D-xylulose 5-phosphate binding site. Arg18 is a 3-amino-2-oxopropyl phosphate binding site. Catalysis depends on His43, which acts as the Proton acceptor. 1-deoxy-D-xylulose 5-phosphate is bound by residues Arg45 and His50. Glu70 acts as the Proton acceptor in catalysis. Thr100 is a binding site for 1-deoxy-D-xylulose 5-phosphate. His191 (proton donor) is an active-site residue. 3-amino-2-oxopropyl phosphate is bound by residues Gly192 and Gly213–His214.

This sequence belongs to the PNP synthase family. Homooctamer; tetramer of dimers.

Its subcellular location is the cytoplasm. The enzyme catalyses 3-amino-2-oxopropyl phosphate + 1-deoxy-D-xylulose 5-phosphate = pyridoxine 5'-phosphate + phosphate + 2 H2O + H(+). It participates in cofactor biosynthesis; pyridoxine 5'-phosphate biosynthesis; pyridoxine 5'-phosphate from D-erythrose 4-phosphate: step 5/5. In terms of biological role, catalyzes the complicated ring closure reaction between the two acyclic compounds 1-deoxy-D-xylulose-5-phosphate (DXP) and 3-amino-2-oxopropyl phosphate (1-amino-acetone-3-phosphate or AAP) to form pyridoxine 5'-phosphate (PNP) and inorganic phosphate. The sequence is that of Pyridoxine 5'-phosphate synthase from Magnetococcus marinus (strain ATCC BAA-1437 / JCM 17883 / MC-1).